Here is a 57-residue protein sequence, read N- to C-terminus: uncharacterized protein (57 aa).

A helical transmembrane segment spans residues 34–54 (AALLDAAALVVIPGLLTAAAV).

The protein resides in the membrane. This is an uncharacterized protein from Dictyostelium discoideum (Social amoeba).